A 286-amino-acid polypeptide reads, in one-letter code: Bifunctional protein FolD 2 (286 aa).

NADP(+) is bound by residues 165 to 167 (GRG), Thr-192, and Val-233.

This sequence belongs to the tetrahydrofolate dehydrogenase/cyclohydrolase family. In terms of assembly, homodimer.

It carries out the reaction (6R)-5,10-methylene-5,6,7,8-tetrahydrofolate + NADP(+) = (6R)-5,10-methenyltetrahydrofolate + NADPH. It catalyses the reaction (6R)-5,10-methenyltetrahydrofolate + H2O = (6R)-10-formyltetrahydrofolate + H(+). It functions in the pathway one-carbon metabolism; tetrahydrofolate interconversion. Catalyzes the oxidation of 5,10-methylenetetrahydrofolate to 5,10-methenyltetrahydrofolate and then the hydrolysis of 5,10-methenyltetrahydrofolate to 10-formyltetrahydrofolate. This Rhodococcus jostii (strain RHA1) protein is Bifunctional protein FolD 2.